The following is a 316-amino-acid chain: ATP synthase gamma chain (316 aa).

This sequence belongs to the ATPase gamma chain family. F-type ATPases have 2 components, CF(1) - the catalytic core - and CF(0) - the membrane proton channel. CF(1) has five subunits: alpha(3), beta(3), gamma(1), delta(1), epsilon(1). CF(0) has three main subunits: a, b and c.

The protein resides in the cellular thylakoid membrane. Produces ATP from ADP in the presence of a proton gradient across the membrane. The gamma chain is believed to be important in regulating ATPase activity and the flow of protons through the CF(0) complex. This chain is ATP synthase gamma chain, found in Prochlorococcus marinus (strain MIT 9515).